We begin with the raw amino-acid sequence, 323 residues long: tRNA U34 carboxymethyltransferase (323 aa).

Carboxy-S-adenosyl-L-methionine-binding positions include Lys-91, Trp-105, Lys-110, Gly-130, 180 to 181 (VE), Met-196, Tyr-200, and Arg-315.

Belongs to the class I-like SAM-binding methyltransferase superfamily. CmoB family. Homotetramer.

It carries out the reaction carboxy-S-adenosyl-L-methionine + 5-hydroxyuridine(34) in tRNA = 5-carboxymethoxyuridine(34) in tRNA + S-adenosyl-L-homocysteine + H(+). Its function is as follows. Catalyzes carboxymethyl transfer from carboxy-S-adenosyl-L-methionine (Cx-SAM) to 5-hydroxyuridine (ho5U) to form 5-carboxymethoxyuridine (cmo5U) at position 34 in tRNAs. In Trichlorobacter lovleyi (strain ATCC BAA-1151 / DSM 17278 / SZ) (Geobacter lovleyi), this protein is tRNA U34 carboxymethyltransferase.